Reading from the N-terminus, the 259-residue chain is Translation initiation factor IF-2, chloroplastic (259 aa).

The 89-residue stretch at Leu-171–Ile-259 folds into the tr-type G domain. Gly-180–Thr-187 contributes to the GTP binding site.

The protein belongs to the TRAFAC class translation factor GTPase superfamily. Classic translation factor GTPase family. IF-2 subfamily.

The protein resides in the plastid. It is found in the chloroplast. Its function is as follows. One of the essential components for the initiation of protein synthesis. Protects formylmethionyl-tRNA from spontaneous hydrolysis and promotes its binding to the 30S ribosomal subunits. Also involved in the hydrolysis of GTP during the formation of the 70S ribosomal complex. The protein is Translation initiation factor IF-2, chloroplastic (infB) of Galdieria sulphuraria (Red alga).